Reading from the N-terminus, the 253-residue chain is Tryptophan synthase alpha chain (253 aa).

Active-site proton acceptor residues include glutamate 47 and aspartate 58.

This sequence belongs to the TrpA family. Tetramer of two alpha and two beta chains.

The enzyme catalyses (1S,2R)-1-C-(indol-3-yl)glycerol 3-phosphate + L-serine = D-glyceraldehyde 3-phosphate + L-tryptophan + H2O. It functions in the pathway amino-acid biosynthesis; L-tryptophan biosynthesis; L-tryptophan from chorismate: step 5/5. In terms of biological role, the alpha subunit is responsible for the aldol cleavage of indoleglycerol phosphate to indole and glyceraldehyde 3-phosphate. This Lactococcus lactis subsp. lactis (strain IL1403) (Streptococcus lactis) protein is Tryptophan synthase alpha chain.